A 1825-amino-acid chain; its full sequence is Serine protease/ABC transporter B family protein tagD (1825 aa).

The signal sequence occupies residues 1 to 26 (MKSNTNIRVLLVSGLILIFIFLGIKF). One can recognise a Peptidase S8 domain in the interval 307 to 727 (PKAIFGTKDT…NAVFDTFAGA (421 aa)). Residues Asp-338 and His-384 each act as charge relay system in the active site. N-linked (GlcNAc...) asparagine glycosylation occurs at Asn-629. The active-site Charge relay system is the Ser-652. Asn-704, Asn-781, Asn-849, and Asn-896 each carry an N-linked (GlcNAc...) asparagine glycan. Residues 971 to 991 (YIVIIVAGGTMSLIITVLILI) form a helical membrane-spanning segment. Asn-1018 carries an N-linked (GlcNAc...) asparagine glycan. 4 helical membrane passes run 1071-1091 (FIIE…ASIL), 1116-1136 (FIII…SSWI), 1189-1209 (GILL…VFIF), and 1210-1230 (TISW…AIVT). Positions 1075–1358 (ITISTACSLV…LFGVYSSYVQ (284 aa)) constitute an ABC transmembrane type-1 domain. Asn-1295 carries N-linked (GlcNAc...) asparagine glycosylation. A run of 2 helical transmembrane segments spans residues 1304–1324 (WLMV…LAIQ) and 1327–1347 (FTVG…DSST). Positions 1386–1529 (DNIIDTNQDN…NDDPNDNNGI (144 aa)) are disordered. Low complexity predominate over residues 1388–1402 (IIDTNQDNNNNNNND). Residues 1403 to 1415 (DISDSSSDDDDDN) show a composition bias toward acidic residues. Asn-1424 carries N-linked (GlcNAc...) asparagine glycosylation. Residues 1465 to 1494 (GEGIDNNNNNNNDNNINDDNNQQDPNNNNN) are compositionally biased toward low complexity. The span at 1495–1514 (EIDDDGDDDGDDDDEGEDEN) shows a compositional bias: acidic residues. Positions 1515 to 1529 (NNNNNNDDPNDNNGI) are enriched in low complexity. The region spanning 1576–1813 (IEFKNVSFCY…KGKYYRMFAF (238 aa)) is the ABC transporter domain. Asn-1580 is a glycosylation site (N-linked (GlcNAc...) asparagine). 1611–1618 (GPSGSGKS) is an ATP binding site. 2 N-linked (GlcNAc...) asparagine glycosylation sites follow: Asn-1715 and Asn-1755.

The protein in the C-terminal section; belongs to the ABC transporter superfamily. ABCB family. Multidrug resistance exporter (TC 3.A.1.201) subfamily. It in the N-terminal section; belongs to the peptidase S8 family.

The protein resides in the membrane. The chain is Serine protease/ABC transporter B family protein tagD (tagD) from Dictyostelium discoideum (Social amoeba).